The chain runs to 110 residues: U1-lycotoxin-Ls1bb (110 aa).

Residues 1–20 (MKFVLLFGVLLVTLFSYSSA) form the signal peptide. Positions 21 to 44 (EMLDDFDQADEDELLSLIEKEEAR) are excised as a propeptide. 4 disulfide bridges follow: Cys-47–Cys-62, Cys-54–Cys-71, Cys-61–Cys-89, and Cys-73–Cys-87.

Belongs to the neurotoxin 19 (CSTX) family. 03 subfamily. As to expression, expressed by the venom gland.

Its subcellular location is the secreted. This chain is U1-lycotoxin-Ls1bb, found in Lycosa singoriensis (Wolf spider).